The sequence spans 153 residues: Large ribosomal subunit protein uL30 (153 aa).

Belongs to the universal ribosomal protein uL30 family. Part of the 50S ribosomal subunit.

This chain is Large ribosomal subunit protein uL30, found in Methanocorpusculum labreanum (strain ATCC 43576 / DSM 4855 / Z).